Consider the following 303-residue polypeptide: Probable cell division protein WhiA (303 aa).

Residues 272 to 303 (SIQQIADSLAVPLTKSGVNHRLRKINKIAEDL) constitute a DNA-binding region (H-T-H motif).

This sequence belongs to the WhiA family.

Involved in cell division and chromosome segregation. In Streptococcus mutans serotype c (strain ATCC 700610 / UA159), this protein is Probable cell division protein WhiA.